The following is a 480-amino-acid chain: Phosphomethylpyrimidine synthase (480 aa).

Substrate is bound by residues N66, M95, Y124, H159, 179–181 (SRG), 220–223 (DGLR), and E259. H263 is a binding site for Zn(2+). Y286 contacts substrate. H327 serves as a coordination point for Zn(2+). Residues C407, C410, and C415 each coordinate [4Fe-4S] cluster. The tract at residues 426-480 (DGDMESIEADADDRTPLEDSSAAAVNRPPVGTHDGADIPGPDADMPADTEGSADD) is disordered. Positions 470 to 480 (MPADTEGSADD) are enriched in acidic residues.

It belongs to the ThiC family. It depends on [4Fe-4S] cluster as a cofactor.

It carries out the reaction 5-amino-1-(5-phospho-beta-D-ribosyl)imidazole + S-adenosyl-L-methionine = 4-amino-2-methyl-5-(phosphooxymethyl)pyrimidine + CO + 5'-deoxyadenosine + formate + L-methionine + 3 H(+). Its pathway is cofactor biosynthesis; thiamine diphosphate biosynthesis. Catalyzes the synthesis of the hydroxymethylpyrimidine phosphate (HMP-P) moiety of thiamine from aminoimidazole ribotide (AIR) in a radical S-adenosyl-L-methionine (SAM)-dependent reaction. This chain is Phosphomethylpyrimidine synthase, found in Haloarcula marismortui (strain ATCC 43049 / DSM 3752 / JCM 8966 / VKM B-1809) (Halobacterium marismortui).